Here is a 472-residue protein sequence, read N- to C-terminus: Glutamate synthase [NADPH] small chain (472 aa).

The 4Fe-4S ferredoxin-type domain occupies 41 to 72 (QDAAAQAHRCLHCGNPYCEWKCPVHNYIPNWL). The [4Fe-4S] cluster site is built by cysteine 50, cysteine 53, cysteine 58, and cysteine 62.

[4Fe-4S] cluster is required as a cofactor.

It catalyses the reaction 2 L-glutamate + NADP(+) = L-glutamine + 2-oxoglutarate + NADPH + H(+). It functions in the pathway amino-acid biosynthesis; L-glutamate biosynthesis via GLT pathway; L-glutamate from 2-oxoglutarate and L-glutamine (NADP(+) route): step 1/1. Its pathway is energy metabolism; nitrogen metabolism. Catalyzes the conversion of L-glutamine and 2-oxoglutarate into two molecules of L-glutamate. This is Glutamate synthase [NADPH] small chain from Halomonas elongata (strain ATCC 33173 / DSM 2581 / NBRC 15536 / NCIMB 2198 / 1H9).